The chain runs to 509 residues: L-arabinose isomerase (509 aa).

Positions 313, 340, 357, and 456 each coordinate Mn(2+).

Belongs to the arabinose isomerase family. Mn(2+) serves as cofactor.

It catalyses the reaction beta-L-arabinopyranose = L-ribulose. Its pathway is carbohydrate degradation; L-arabinose degradation via L-ribulose; D-xylulose 5-phosphate from L-arabinose (bacterial route): step 1/3. Functionally, catalyzes the conversion of L-arabinose to L-ribulose. This is L-arabinose isomerase from Phocaeicola vulgatus (strain ATCC 8482 / DSM 1447 / JCM 5826 / CCUG 4940 / NBRC 14291 / NCTC 11154) (Bacteroides vulgatus).